The primary structure comprises 328 residues: UPF0421 protein SAUSA300_1870 (328 aa).

4 helical membrane passes run 19–39 (IAIF…IYAI), 61–81 (LPAT…FGDQ), 108–128 (VAVL…IFNF), and 132–152 (TLTA…VFPP).

It belongs to the UPF0421 family.

The protein localises to the cell membrane. The chain is UPF0421 protein SAUSA300_1870 from Staphylococcus aureus (strain USA300).